The following is a 477-amino-acid chain: MEKHGTNEGALWGGRFSGGPSEAMFALSVSTHFDWVLAPYDVLASKAHAKVLHSAGLLSDADLDTMLEGLDQLGRDVADGSFGPLPSDEDVHGAMERGLIDRVGPEVGGRLRAGRSRNDQVATLFRMWVRDAIRGIAVGVTELIDALTTQAAAHPDAIMPGKTHFQAAQPVLLAHQLQAHAQPLLRDLERIRDLDKRLAVSPYGSGALAGSSLQLNPEAIAAELGFDSAADNSIDATSSRDFASEAAFVLAQIAVDMSRLAEEIIAWCTPEFGYIVLADAWSTGSSIMPQKKNPDVAELTRGKTGRLIGNLAGLLATLKAQPLAYNRDLQEDKEPIVDSVAQLNLLLPAMTGLVSTLTFNTDRMRELAPAGYTLATDLAEWMVREGVPFREAHEASGACVRIAEGRGVDLVDLTDEELAGVDPRLTPAVRDVLTIEGAVASRATRGGTAGDRVSEQRDRINQANADHLAWATTPVRS.

It belongs to the lyase 1 family. Argininosuccinate lyase subfamily.

It localises to the cytoplasm. It carries out the reaction 2-(N(omega)-L-arginino)succinate = fumarate + L-arginine. Its pathway is amino-acid biosynthesis; L-arginine biosynthesis; L-arginine from L-ornithine and carbamoyl phosphate: step 3/3. The chain is Argininosuccinate lyase from Corynebacterium efficiens (strain DSM 44549 / YS-314 / AJ 12310 / JCM 11189 / NBRC 100395).